The following is a 637-amino-acid chain: MSPRIQQLAAVLLAAVVVVAAARDEPAAAKNYQTQWDTVMSILNCKSDSLIPSYICSVISKSRWGWASDDPNDDEYTPPDHPLPAPAAGRRRWPVMTSLNLTKYVDSLPRIAKIRGYGIRHGRPVPIKLTIGMYSKTWQFHRDMPPTPVFVYGQSLQTATFPGPTIVARQGVPLAVEWQNHLPDAHILPWDPKVPTAIPKKGGVPTVVHLHGGAHPPEFDGHAFAWFTRDFAENGSTWTRKTYTYPNVQAPGNLWYHDHALGLTRVSLLAGLLAAYVIEKPELEDPMNLPCGDHDLHLVIADREFYTNGSISIDREWKPEYFGLVITVNGKAWPYLSVQRRRYRLRILNASNARYFNVTLSNGALPFTVIGSDSSYLSRPVTVSNLVLSPAEIFDVIVDFSRLPAAMTEIEMLNTAPYPFPNGPNVTDPNLDGKVMLFKVAGKGKVDDMPDKSKVPEHGVPYASVAALPPPTTTRYIVLYENQTAPGNLYINGLRLEDPVTETPKSGTTELWQVINLTGDNHPLHLHIATFQAIKMTKIEGFQVFKDCMIKNNNTATCNLDQHAVGPVVPVPEEEKTWKNAVKIPPEFMTSVVVAFRLVEANQPYPFDATTEPGFVYHCHILDHEDNAMIRPLKLLP.

An N-terminal signal peptide occupies residues 1-21 (MSPRIQQLAAVLLAAVVVVAA). N-linked (GlcNAc...) asparagine glycosylation occurs at N100. Cu cation is bound by residues H209 and H211. N234 is a glycosylation site (N-linked (GlcNAc...) asparagine). The Cu cation site is built by H257 and H259. 6 N-linked (GlcNAc...) asparagine glycosylation sites follow: N308, N349, N357, N425, N482, and N516. Residues 334-406 (PYLSVQRRRY…IVDFSRLPAA (73 aa)) form the Plastocyanin-like domain. Residues H522, H525, and H527 each contribute to the Cu cation site. N-linked (GlcNAc...) asparagine glycosylation occurs at N553. Cu cation contacts are provided by H618, C619, H620, H624, and M629.

Belongs to the multicopper oxidase family. Cu cation is required as a cofactor. In terms of tissue distribution, highly expressed in roots and basal stems.

Its subcellular location is the endoplasmic reticulum membrane. Multicopper oxidase that may play a role in the maintenance of inorganic phosphate homeostasis. This Oryza sativa subsp. japonica (Rice) protein is Multicopper oxidase LPR1 homolog 5.